The sequence spans 455 residues: MAPQLLLCLILTFLWSLPEAESNVFLKSKVANRFLQRTKRSNSLFEEIRPGNIERECIEEKCSKEEAREVFEDNEKTETFWNVYVDGDQCSSNPCHYRGTCKDGIGSYTCTCLPNYEGKNCEKVLYQSCRVDNGNCWHFCKRVQSETQCSCAESYRLGVDGHSCVAEGDFSCGRNIKARNKREASLPDFVQSQKATLLKKSDNPSPDIRIVNGMDCKLGECPWQAVLINEKGEVFCGGTILSPIHVLTAAHCINQTKSVSVIVGEIDISRKETRRLLSVDKIYVHTKFVPPNYYYVHQNFDRVAYDYDIAIIRMKTPIQFSENVVPACLPTADFANEVLMKQDSGIVSGFGRIQFKQPTSNTLKVITVPYVDRHTCMLSSDFRITQNMFCAGYDTLPQDACQGDSGGPHITAYRDTHFITGIISWGEGCARKGKYGVYTKVSKFIPWIKKIMSLK.

The signal sequence occupies residues 1–20 (MAPQLLLCLILTFLWSLPEA). The propeptide occupies 21–40 (ESNVFLKSKVANRFLQRTKR). In terms of domain architecture, Gla spans 41 to 86 (SNSLFEEIRPGNIERECIEEKCSKEEAREVFEDNEKTETFWNVYVD). A 4-carboxyglutamate mark is found at glutamate 46, glutamate 47, glutamate 54, glutamate 56, glutamate 59, glutamate 60, glutamate 65, glutamate 66, glutamate 69, glutamate 72, and glutamate 75. Residues cysteine 57 and cysteine 62 are joined by a disulfide bond. The 37-residue stretch at 86 to 122 (DGDQCSSNPCHYRGTCKDGIGSYTCTCLPNYEGKNCE) folds into the EGF-like 1; calcium-binding domain. Disulfide bonds link cysteine 90–cysteine 101, cysteine 95–cysteine 110, cysteine 112–cysteine 121, cysteine 129–cysteine 140, cysteine 136–cysteine 149, cysteine 151–cysteine 164, cysteine 172–cysteine 328, cysteine 216–cysteine 221, cysteine 236–cysteine 252, cysteine 376–cysteine 390, and cysteine 401–cysteine 429. A glycan (O-linked (Hex...) serine) is linked at serine 92. The EGF-like 2 domain maps to 129–164 (CRVDNGNCWHFCKRVQSETQCSCAESYRLGVDGHSC). The propeptide at 182–209 (REASLPDFVQSQKATLLKKSDNPSPDIR) is activation peptide. Residues 210–453 (IVNGMDCKLG…FIPWIKKIMS (244 aa)) form the Peptidase S1 domain. Catalysis depends on histidine 251, which acts as the Charge relay system. N-linked (GlcNAc...) asparagine glycosylation is present at asparagine 254. Aspartate 308 acts as the Charge relay system in catalysis. Serine 405 (charge relay system) is an active-site residue.

The protein belongs to the peptidase S1 family. Snake venom subfamily. As to quaternary structure, heterodimer of a light chain and a heavy chain; disulfide-linked. In terms of processing, gamma-carboxyglutamate residues are formed by vitamin K dependent carboxylation. These residues are essential for the binding of calcium. The O-linked saccharides at Ser-92 are a mixture of Xyl-Glc, and Glc along with smaller amounts of Xyl-GlcNAc, GlcNAc, Gal, GalNAc, Xyl-Gal, and Xyl-GalNAc, suggesting that the glycosyl transferases responsible for this modification are non-specific. The N-linked carbohydrate at Asn-254 (Asn-45 of the heavy chain) is a sialylated and diantennary oligosaccharide. As to expression, expressed by the venom gland.

The protein localises to the secreted. The catalysed reaction is Selective cleavage of Arg-|-Thr and then Arg-|-Ile bonds in prothrombin to form thrombin.. With respect to regulation, activated by calcium and phospholipids. Functionally, snake prothrombin activator that attacks the hemostatic system of prey. This protein is functionally similar to blood coagulation factor Xa. Induces cyanosis and death in mice at 1 mg/kg body weight during blood clotting. The polypeptide is Venom prothrombin activator trocarin-D (Tropidechis carinatus (Australian rough-scaled snake)).